Reading from the N-terminus, the 369-residue chain is CCA-adding enzyme (369 aa).

ATP-binding residues include Gly-8 and Arg-11. CTP is bound by residues Gly-8 and Arg-11. Mg(2+) contacts are provided by Asp-21 and Asp-23. ATP-binding residues include Arg-91, Arg-137, and Arg-140. The CTP site is built by Arg-91, Arg-137, and Arg-140.

This sequence belongs to the tRNA nucleotidyltransferase/poly(A) polymerase family. Bacterial CCA-adding enzyme type 2 subfamily. Mg(2+) is required as a cofactor.

The catalysed reaction is a tRNA precursor + 2 CTP + ATP = a tRNA with a 3' CCA end + 3 diphosphate. The enzyme catalyses a tRNA with a 3' CCA end + 2 CTP + ATP = a tRNA with a 3' CCACCA end + 3 diphosphate. Catalyzes the addition and repair of the essential 3'-terminal CCA sequence in tRNAs without using a nucleic acid template. Adds these three nucleotides in the order of C, C, and A to the tRNA nucleotide-73, using CTP and ATP as substrates and producing inorganic pyrophosphate. tRNA 3'-terminal CCA addition is required both for tRNA processing and repair. Also involved in tRNA surveillance by mediating tandem CCA addition to generate a CCACCA at the 3' terminus of unstable tRNAs. While stable tRNAs receive only 3'-terminal CCA, unstable tRNAs are marked with CCACCA and rapidly degraded. The polypeptide is CCA-adding enzyme (Francisella tularensis subsp. novicida (strain U112)).